The chain runs to 1058 residues: SIT4-associating protein SAP185 (1058 aa).

A Glycyl lysine isopeptide (Lys-Gly) (interchain with G-Cter in ubiquitin) cross-link involves residue lysine 20. 6 disordered regions span residues 34-71 (TSTE…NREE), 135-202 (SEDR…ELEE), 513-556 (NSQN…TSID), 818-862 (CQEE…DQEQ), 873-892 (TKTR…VPGE), and 934-992 (ELSD…HDYD). A compositionally biased stretch (polar residues) spans 42 to 55 (DSNSTDESLESNSF). Basic and acidic residues-rich tracts occupy residues 135-146 (SEDRDLVRGEDK) and 153-175 (ENAK…TRSG). The segment covering 176–189 (EEEELENEENDSAS) has biased composition (acidic residues). Residues 190–202 (EDTRVTLPHELEE) are compositionally biased toward basic and acidic residues. Composition is skewed to acidic residues over residues 528–546 (ENED…DDTN) and 820–837 (EEEE…EDEP). A compositionally biased stretch (basic and acidic residues) spans 838–861 (QEYRNGDSVRSKESNSSEGKRDQE). Polar residues predominate over residues 934–963 (ELSDGWESSPSNSIPKRASPSKNGMNSPMF). The span at 967-991 (FELHSPTDEFGGHKDEILSAEGHDY) shows a compositional bias: basic and acidic residues.

This sequence belongs to the SAPS family. Post-translationally, hyperphosphorylated in the absence of SIT4.

Associates with the SIT4 phosphatase in a cell cycle dependent manner. May be directly or indirectly involved in SIT4-dependent functions in budding and in normal G1 cyclin expression. This is SIT4-associating protein SAP185 (SAP185) from Saccharomyces cerevisiae (strain ATCC 204508 / S288c) (Baker's yeast).